A 346-amino-acid polypeptide reads, in one-letter code: Elongation factor Ts (346 aa).

The segment at 80-83 (TDFV) is involved in Mg(2+) ion dislocation from EF-Tu.

Belongs to the EF-Ts family.

It localises to the cytoplasm. Its function is as follows. Associates with the EF-Tu.GDP complex and induces the exchange of GDP to GTP. It remains bound to the aminoacyl-tRNA.EF-Tu.GTP complex up to the GTP hydrolysis stage on the ribosome. This is Elongation factor Ts from Streptococcus pneumoniae (strain 70585).